A 2146-amino-acid chain; its full sequence is YLP motif-containing protein 1 (2146 aa).

2 disordered regions span residues 1 to 381 and 562 to 880; these read MYPN…ARLK and PPVM…FKMQ. Pro residues predominate over residues 14–26; that stretch reads YPPPPVPPPPPVA. Composition is skewed to low complexity over residues 27 to 48 and 58 to 79; these read LPEA…PSSS and LAQL…LQPH. 5 stretches are compositionally biased toward pro residues: residues 80-92, 101-113, 147-157, 165-175, and 183-194; these read HLPP…PPVM, QPPP…PPGP, PESPPVPPGSY, MPPPQPPPSYY, and YLPPAQPSPSQS. Low complexity predominate over residues 195 to 237; that stretch reads PPSQSYLAPTPSYSSSSSSSQSYLSHSQSYLPSSQASPSRPSQ. 2 stretches are compositionally biased toward polar residues: residues 256-279 and 286-308; these read NKTT…QQQA and STMT…LQQR. Residues 309–319 are compositionally biased toward basic residues; it reads TKVHLPGHKKG. Basic and acidic residues predominate over residues 325–334; that stretch reads DTPEPVKEEV. Composition is skewed to pro residues over residues 349-368, 562-579, and 586-642; these read EEPP…PPEE, PPVM…PGMP, and GPPP…PQGI. Residues 643–663 are compositionally biased toward low complexity; it reads PPQLTAAPVPPASSSQSSQVP. The span at 692 to 702 shows a compositional bias: polar residues; the sequence is AGPSEQVNSKA. Residue Lys735 is modified to N6-methyllysine. Residue Ser756 is modified to Phosphoserine. Positions 758 to 806 are enriched in basic and acidic residues; it reads RGPRFDGPRRFEDLGSRCEGPRPKGPRFEGNRPDGPRPRYEGHPAEGTK. Position 814 is an omega-N-methylarginine (Arg814). 2 stretches are compositionally biased toward polar residues: residues 820–835 and 868–880; these read FYIT…QSGP and DTSS…FKMQ. Ser829 carries the phosphoserine modification. Arg831 is subject to Omega-N-methylarginine. Lys891 participates in a covalent cross-link: Glycyl lysine isopeptide (Lys-Gly) (interchain with G-Cter in SUMO2). Disordered stretches follow at residues 895-1211 and 1243-1351; these read AAQS…GRNA and NRED…DDRW. 2 stretches are compositionally biased toward polar residues: residues 896–909 and 923–933; these read AQSN…QQEP and NWDQNVQSMET. Lys983 participates in a covalent cross-link: Glycyl lysine isopeptide (Lys-Gly) (interchain with G-Cter in SUMO1); alternate. A Glycyl lysine isopeptide (Lys-Gly) (interchain with G-Cter in SUMO2); alternate cross-link involves residue Lys983. 3 stretches are compositionally biased toward basic and acidic residues: residues 994–1012, 1027–1036, and 1053–1093; these read NNQD…RLEG, RMEDTRDKGL, and KQED…REKV. Lys1053 participates in a covalent cross-link: Glycyl lysine isopeptide (Lys-Gly) (interchain with G-Cter in SUMO1); alternate. Lys1053 is covalently cross-linked (Glycyl lysine isopeptide (Lys-Gly) (interchain with G-Cter in SUMO2); alternate). 2 positions are modified to phosphoserine: Ser1100 and Ser1119. 2 stretches are compositionally biased toward basic and acidic residues: residues 1129-1211 and 1243-1264; these read GSRE…GRNA and NRED…RGPW. A compositionally biased stretch (acidic residues) spans 1266 to 1276; the sequence is DDWERDQDMDE. Basic and acidic residues predominate over residues 1277 to 1328; that stretch reads DYNREMERDMDRDVDRISRPMDMYDRSLDNEWDRDYGRPLDEQESQFRERDI. The span at 1330-1342 shows a compositional bias: pro residues; the sequence is SLPPLPPLPPLPP. Ser1402 bears the Phosphoserine mark. Disordered stretches follow at residues 1407–1438, 1469–1573, and 1602–1828; these read PSDV…SLDS, QKEQ…EQER, and IPSA…PPGR. Over residues 1417 to 1430 the composition is skewed to low complexity; sequence AEHMPSSHHSSEMM. The segment covering 1469–1480 has biased composition (basic and acidic residues); sequence QKEQLQKMKDFG. Positions 1505 to 1520 are enriched in pro residues; the sequence is MYPPPGSYRPPPPMGK. The span at 1521-1539 shows a compositional bias: low complexity; it reads PPGSIVRPSAPPARSSVPV. 2 stretches are compositionally biased toward pro residues: residues 1540–1562 and 1606–1636; these read TRPP…PPVI and PVLP…PPPV. Residue Lys1652 forms a Glycyl lysine isopeptide (Lys-Gly) (interchain with G-Cter in SUMO2) linkage. 4 stretches are compositionally biased toward basic and acidic residues: residues 1662-1696, 1704-1774, 1783-1793, and 1809-1828; these read ITLR…EPYF, ADHR…DRPV, GERRTYPEERM, and RVEK…PPGR. Lys1710 participates in a covalent cross-link: Glycyl lysine isopeptide (Lys-Gly) (interchain with G-Cter in SUMO2). Residues 2096–2103 form an involved in interaction with PPP1CA region; it reads KKRVRWAD.

In terms of assembly, interacts with PPP1CA and NCOA5. Forms a complex with ILF2, ILF3, KHDRBS1, RBMX, NCOA5 and PPP1CA. In terms of tissue distribution, expressed in neuronal, neuroblastoma and embryonic kidney cell lines (at protein level).

The protein localises to the nucleus. The protein resides in the nucleus speckle. Plays a role in the reduction of telomerase activity during differentiation of embryonic stem cells by binding to the core promoter of TERT and controlling its down-regulation. The polypeptide is YLP motif-containing protein 1 (YLPM1) (Homo sapiens (Human)).